Here is a 427-residue protein sequence, read N- to C-terminus: Glutamate-1-semialdehyde 2,1-aminomutase (427 aa).

The residue at position 265 (Lys265) is an N6-(pyridoxal phosphate)lysine.

The protein belongs to the class-III pyridoxal-phosphate-dependent aminotransferase family. HemL subfamily. As to quaternary structure, homodimer. The cofactor is pyridoxal 5'-phosphate.

The protein resides in the cytoplasm. The catalysed reaction is (S)-4-amino-5-oxopentanoate = 5-aminolevulinate. It functions in the pathway porphyrin-containing compound metabolism; protoporphyrin-IX biosynthesis; 5-aminolevulinate from L-glutamyl-tRNA(Glu): step 2/2. The sequence is that of Glutamate-1-semialdehyde 2,1-aminomutase from Pasteurella multocida (strain Pm70).